The sequence spans 245 residues: Adapter protein MecA (245 aa).

It belongs to the MecA family. As to quaternary structure, homodimer.

Its function is as follows. Enables the recognition and targeting of unfolded and aggregated proteins to the ClpC protease or to other proteins involved in proteolysis. This Streptococcus pneumoniae (strain Hungary19A-6) protein is Adapter protein MecA.